Consider the following 107-residue polypeptide: Iron-sulfur cluster assembly protein CyaY (107 aa).

Belongs to the frataxin family.

Its function is as follows. Involved in iron-sulfur (Fe-S) cluster assembly. May act as a regulator of Fe-S biogenesis. The protein is Iron-sulfur cluster assembly protein CyaY of Neisseria meningitidis serogroup A / serotype 4A (strain DSM 15465 / Z2491).